The primary structure comprises 545 residues: Glucose-6-phosphate isomerase (545 aa).

The active-site Proton donor is the Glu351. Active-site residues include His382 and Lys510.

This sequence belongs to the GPI family.

The protein resides in the cytoplasm. The enzyme catalyses alpha-D-glucose 6-phosphate = beta-D-fructose 6-phosphate. It participates in carbohydrate biosynthesis; gluconeogenesis. Its pathway is carbohydrate degradation; glycolysis; D-glyceraldehyde 3-phosphate and glycerone phosphate from D-glucose: step 2/4. Its function is as follows. Catalyzes the reversible isomerization of glucose-6-phosphate to fructose-6-phosphate. The sequence is that of Glucose-6-phosphate isomerase from Shewanella baltica (strain OS155 / ATCC BAA-1091).